A 480-amino-acid polypeptide reads, in one-letter code: Sporozoite surface protein P36p (480 aa).

Positions 1–22 (MKRRSIFMYYCFCFLLKYVAFS) are cleaved as a signal peptide. 2 consecutive 6-Cys domains span residues 23 to 156 (NVPN…FKKM) and 159 to 298 (KIKG…TSKN). 5 N-linked (GlcNAc...) asparagine glycosylation sites follow: Asn-28, Asn-40, Asn-92, Asn-111, and Asn-184. Intrachain disulfides connect Cys-37/Cys-49, Cys-63/Cys-137, Cys-80/Cys-135, Cys-163/Cys-187, Cys-201/Cys-280, and Cys-221/Cys-278. Asn-294, Asn-368, Asn-375, Asn-392, Asn-405, Asn-409, and Asn-424 each carry an N-linked (GlcNAc...) asparagine glycan. The segment at 358 to 415 (KMDSSDDDESNETESSENESNERTHNGNRANKDANNSEKMTGNRRKKNNSINNTNYYS) is disordered. The span at 362 to 376 (SDDDESNETESSENE) shows a compositional bias: acidic residues. A compositionally biased stretch (basic and acidic residues) spans 377-393 (SNERTHNGNRANKDANN). Residues 406 to 415 (NSINNTNYYS) are compositionally biased toward low complexity. Residue Ser-457 is the site of GPI-anchor amidated serine attachment. A propeptide spans 458-480 (SSYYEVFNYFSIAFILIIHMLLL) (removed in mature form).

It is found in the cell surface. It localises to the cell membrane. In terms of biological role, involved in sporozoite infection of hepatocytes and replication therein. This chain is Sporozoite surface protein P36p (P52), found in Plasmodium yoelii yoelii.